The following is a 64-amino-acid chain: Large ribosomal subunit protein bL35 (64 aa).

Positions 19-41 (SGKVKRERMNGSHNLEHKNRKRT) are disordered. Residues 25 to 35 (ERMNGSHNLEH) are compositionally biased toward basic and acidic residues.

Belongs to the bacterial ribosomal protein bL35 family.

This chain is Large ribosomal subunit protein bL35, found in Chlorobaculum tepidum (strain ATCC 49652 / DSM 12025 / NBRC 103806 / TLS) (Chlorobium tepidum).